Reading from the N-terminus, the 576-residue chain is CDPK-related kinase 1 (576 aa).

The tract at residues 1–39 (MGICHGKPVEQQSKSLPVSGETNEAPTNSQPPAKSSGFP) is disordered. G2 carries the N-myristoyl glycine lipid modification. Polar residues predominate over residues 10–33 (EQQSKSLPVSGETNEAPTNSQPPA). Residues 123-385 (YEIDGEVGRG…AAQALCHPWL (263 aa)) form the Protein kinase domain. ATP is bound by residues 129 to 137 (VGRGHFGYT) and K155. D251 (proton acceptor) is an active-site residue. S291 carries the post-translational modification Phosphoserine. Residue S333 is modified to Phosphoserine; by CPK1 and CPK34. The autoinhibitory domain stretch occupies residues 390 to 420 (ELKIPSDMIIYKLVKVYIMSTSLRKSALAAL). A calmodulin binding (CaMBD) region spans residues 409–429 (STSLRKSALAALAKTLTVPQL). EF-hand domains are found at residues 427–463 (PQLA…STDA), 464–499 (MKDS…VYQL), 500–539 (EAME…GPSV), and 542–571 (HVVL…VSSR). Ca(2+) contacts are provided by S442, N444, Y446, K483, E488, D519, N521, E528, D553, and K555. Position 557 is a phosphoserine (S557).

It belongs to the protein kinase superfamily. Ser/Thr protein kinase family. CDPK subfamily. As to quaternary structure, binds calmodulin (CaM) in a calcium-dependent manner. Interacts with HSFA1A. Post-translationally, autophosphorylated.

Its subcellular location is the membrane. It catalyses the reaction L-seryl-[protein] + ATP = O-phospho-L-seryl-[protein] + ADP + H(+). The enzyme catalyses L-threonyl-[protein] + ATP = O-phospho-L-threonyl-[protein] + ADP + H(+). With respect to regulation, activated by calcium and calmodulin. Autophosphorylation may play an important role in the regulation of the kinase activity. Functionally, may play a role in signal transduction pathways that involve calcium as a second messenger. Serine/threonine kinase that phosphorylates histone H3. Confers thermotolerance; involved in the heat-shock-mediated calmodulin-dependent signal transduction leading to the activation of heat-shock transcription factors (HSFs); phosphorylates HSFA1A. This chain is CDPK-related kinase 1 (CRK1), found in Arabidopsis thaliana (Mouse-ear cress).